The chain runs to 629 residues: Ionotropic receptor 75a (629 aa).

The Extracellular portion of the chain corresponds to 1–335 (MQLVQLANFV…GDVFLQPFSP (335 aa)). Residues N61, N112, N126, N144, N166, and N232 are each glycosylated (N-linked (GlcNAc...) asparagine). The chain crosses the membrane as a helical span at residues 336-356 (LVWYLFGGVLSLIGVLLWITF). At 357 to 374 (YMECKRMQKRWRLDYLPS) the chain is on the cytoplasmic side. A helical membrane pass occupies residues 375–395 (LLSTFLISFGAACIQSSSLIP). At 396–402 (RSAGGRL) the chain is on the extracellular side. A helical transmembrane segment spans residues 403-423 (IYFALFLISFIMYNYYTSVVV). Over 424–592 (SSLLSSPVKS…NFVITVGMEY (169 aa)) the chain is Cytoplasmic. The chain crosses the membrane as a helical span at residues 593 to 613 (VAPLLLMLICADILVVVILLV). Over 614–629 (ELAWKRFFTRPLTIHP) the chain is Extracellular.

The protein belongs to the glutamate-gated ion channel (TC 1.A.10.1) family. In terms of tissue distribution, expressed in neurons in the antennal coeloconic 2 (ac2) sensillum class of sensory hairs (at protein level).

The protein resides in the cell membrane. Its subcellular location is the cell projection. The protein localises to the dendrite. Olfactory receptor for propionic, butyric and 2-oxopentanoic acids. This chain is Ionotropic receptor 75a, found in Drosophila sechellia (Fruit fly).